The sequence spans 446 residues: GRAM domain-containing protein 2B (446 aa).

Met-1 is modified (N-acetylmethionine). The segment at 1 to 120 (MVKKRLPSND…RKKSSSSSQY (120 aa)) is disordered. Positions 29 to 43 (SRSSTDSPSSVFFSS) are enriched in low complexity. The segment covering 95–113 (DKNDCKTESKNDPKTERKK) has biased composition (basic and acidic residues). The 68-residue stretch at 124-191 (MHFHKLFLSV…FSVTLIKKTK (68 aa)) folds into the GRAM domain. The span at 234–247 (TSVGNSPNPSSAEN) shows a compositional bias: polar residues. Residues 234-253 (TSVGNSPNPSSAENSFRADR) are disordered. 3 positions are modified to phosphoserine: Ser-239, Ser-256, and Ser-266. Positions 276–298 (RQDMEGYSSSGSQTPESENSRDF) are disordered. Over residues 282 to 292 (YSSSGSQTPES) the composition is skewed to polar residues.

The chain is GRAM domain-containing protein 2B (GRAMD2B) from Pongo abelii (Sumatran orangutan).